The sequence spans 80 residues: Probable antimicrobial peptide clone Con10 (80 aa).

The N-terminal stretch at 1–24 is a signal peptide; sequence MQYKTKTFLVIFLAYLVVTNEAEA. Positions 56 to 80 are excised as a propeptide; it reads EIEDFFDPYQRELDLELERLLSQLQ.

The protein belongs to the non-disulfide-bridged peptide (NDBP) superfamily. Medium-length antimicrobial peptide (group 3) family. In terms of tissue distribution, expressed by the venom gland.

It localises to the secreted. Its subcellular location is the target cell membrane. Its function is as follows. Antimicrobial peptide. Has antifungal activity against all strains tested (MIC=12.5-200 uM). May act by disrupting the integrity of the bacterial cell membrane. This is Probable antimicrobial peptide clone Con10 from Opisthacanthus cayaporum (South American scorpion).